The chain runs to 106 residues: Ferredoxin-2 (106 aa).

2 4Fe-4S ferredoxin-type domains span residues 2–29 (YVVT…YEGE) and 30–59 (NFLV…GKWL). The [3Fe-4S] cluster site is built by C8 and C16. [4Fe-4S] cluster contacts are provided by C20, C39, C42, and C45. C49 serves as a coordination point for [3Fe-4S] cluster. The segment at 80–106 (ADADDWKDKPDKTGLLSENPGKGTVCH) is disordered.

[4Fe-4S] cluster is required as a cofactor. [3Fe-4S] cluster serves as cofactor.

In terms of biological role, ferredoxins are iron-sulfur proteins that transfer electrons in a wide variety of metabolic reactions. This chain is Ferredoxin-2, found in Rhodospirillum rubrum.